Here is a 207-residue protein sequence, read N- to C-terminus: Thymidine kinase (207 aa).

Residues 15–22 (GCMFSGKS) and 88–91 (DEIQ) contribute to the ATP site. Glu-89 acts as the Proton acceptor in catalysis. Positions 145, 148, 183, and 186 each coordinate Zn(2+). Basic residues predominate over residues 184–198 (RHHHEVPGKPKKRYN). A disordered region spans residues 184–207 (RHHHEVPGKPKKRYNHPLAGHTGE).

This sequence belongs to the thymidine kinase family. In terms of assembly, homotetramer.

The protein resides in the cytoplasm. The enzyme catalyses thymidine + ATP = dTMP + ADP + H(+). The sequence is that of Thymidine kinase from Geobacillus kaustophilus (strain HTA426).